The primary structure comprises 185 residues: Elongation factor P (185 aa).

This sequence belongs to the elongation factor P family.

It is found in the cytoplasm. The protein operates within protein biosynthesis; polypeptide chain elongation. Involved in peptide bond synthesis. Stimulates efficient translation and peptide-bond synthesis on native or reconstituted 70S ribosomes in vitro. Probably functions indirectly by altering the affinity of the ribosome for aminoacyl-tRNA, thus increasing their reactivity as acceptors for peptidyl transferase. The chain is Elongation factor P from Clostridium botulinum (strain Alaska E43 / Type E3).